The chain runs to 514 residues: Protein phosphatase 1H (514 aa).

S7 bears the Phosphoserine mark. One can recognise a PPM-type phosphatase domain in the interval 77 to 507 (ATGYAEVINA…DDISVYVIPL (431 aa)). The tract at residues 109-135 (AVTSTPNRNSSKRRSSLPNGEGLQLKE) is disordered. T113 carries the phosphothreonine modification. 2 positions are modified to phosphoserine: S124 and S211. R213 bears the Omega-N-methylarginine mark. Residue S221 is modified to Phosphoserine. T224 is modified (phosphothreonine). S422 carries the post-translational modification Phosphoserine.

Belongs to the PP2C family.

It localises to the nucleus. Its subcellular location is the cytoplasm. It carries out the reaction O-phospho-L-seryl-[protein] + H2O = L-seryl-[protein] + phosphate. It catalyses the reaction O-phospho-L-threonyl-[protein] + H2O = L-threonyl-[protein] + phosphate. Dephosphorylates CDKN1B at 'Thr-187', thus removing a signal for proteasomal degradation. In Homo sapiens (Human), this protein is Protein phosphatase 1H (PPM1H).